The primary structure comprises 494 residues: Sugar phosphate exchanger 3 (494 aa).

The helical transmembrane segment at 10 to 30 (GALLTSFSHHHLAVFLLTFFS) threads the bilayer. Asparagine 58 is a glycosylation site (N-linked (GlcNAc...) asparagine). Helical transmembrane passes span 81-101 (TLFLGTLDTVFLFSYAVGLFI), 113-133 (WVLSFGMCSSAFVVFVFGTLT), 146-166 (GLWIVNGLLQSTGWPCVVAVM), 177-197 (VVFGLWSACASVGNILGAFLA), and 209-229 (FLVTASVQFAGGIIIFFGLLV). Positions 240–261 (GAEESSEEDSQRPLIDGAENED) are disordered. 6 helical membrane-spanning segments follow: residues 297–317 (LAYACLKLVNYSFFFWLPFYL), 333–353 (IWYDVGGIIGGTLLGFISDVL), 357–377 (APVLALSLFLAVWSLVGYSRS), 386–406 (LLMTITGFFIGGPSNMVSSAI), 428–448 (GIVDGTGSIGAAVGQYLVSLI), and 457–477 (VFYFFILMTSCTILFILPLIV).

Belongs to the major facilitator superfamily. Organophosphate:Pi antiporter (OPA) (TC 2.A.1.4) family. As to quaternary structure, interacts with ATRAID; the interaction is direct and both proteins are mutually dependent for their stability. Glycosylated.

It is found in the endoplasmic reticulum membrane. It localises to the lysosome membrane. Unlike the other SLC37 members, lacks glucose-6-phosphate antiporter activity. In osteoclasts, forms a transporter complex with ATRAID for nitrogen-containing-bisphophonates (N-BPs) required for releasing N-BP molecules that have trafficked to lysosomes through fluid-phase endocytosis into the cytosol. The protein is Sugar phosphate exchanger 3 (Slc37a3) of Mus musculus (Mouse).